The sequence spans 317 residues: tRNA dimethylallyltransferase (317 aa).

ATP is bound at residue 14–21 (GPTASGKT). 16-21 (TASGKT) is a substrate binding site. 2 interaction with substrate tRNA regions span residues 39–42 (DSAL) and 163–167 (QRIQR).

This sequence belongs to the IPP transferase family. As to quaternary structure, monomer. It depends on Mg(2+) as a cofactor.

It carries out the reaction adenosine(37) in tRNA + dimethylallyl diphosphate = N(6)-dimethylallyladenosine(37) in tRNA + diphosphate. Its function is as follows. Catalyzes the transfer of a dimethylallyl group onto the adenine at position 37 in tRNAs that read codons beginning with uridine, leading to the formation of N6-(dimethylallyl)adenosine (i(6)A). The chain is tRNA dimethylallyltransferase from Stenotrophomonas maltophilia (strain K279a).